The chain runs to 131 residues: Fluoride-specific ion channel FluC 1 (131 aa).

The next 4 membrane-spanning stretches (helical) occupy residues 4 to 24 (ILLI…LSGW), 32 to 52 (FPLG…LVMY), 66 to 86 (ILLT…SYES), and 95 to 115 (LMQL…AVYL). Residues Gly74 and Thr77 each coordinate Na(+).

The protein belongs to the fluoride channel Fluc/FEX (TC 1.A.43) family.

The protein resides in the cell membrane. It carries out the reaction fluoride(in) = fluoride(out). With respect to regulation, na(+) is not transported, but it plays an essential structural role and its presence is essential for fluoride channel function. In terms of biological role, fluoride-specific ion channel. Important for reducing fluoride concentration in the cell, thus reducing its toxicity. The chain is Fluoride-specific ion channel FluC 1 from Methanosarcina acetivorans (strain ATCC 35395 / DSM 2834 / JCM 12185 / C2A).